Here is a 159-residue protein sequence, read N- to C-terminus: 3-hydroxyacyl-[acyl-carrier-protein] dehydratase FabZ (159 aa).

The active site involves histidine 58.

This sequence belongs to the thioester dehydratase family. FabZ subfamily.

Its subcellular location is the cytoplasm. It carries out the reaction a (3R)-hydroxyacyl-[ACP] = a (2E)-enoyl-[ACP] + H2O. Involved in unsaturated fatty acids biosynthesis. Catalyzes the dehydration of short chain beta-hydroxyacyl-ACPs and long chain saturated and unsaturated beta-hydroxyacyl-ACPs. This Helicobacter pylori (strain G27) protein is 3-hydroxyacyl-[acyl-carrier-protein] dehydratase FabZ.